The primary structure comprises 509 residues: ATP synthase subunit alpha (509 aa).

169–176 (GDRQTGKT) provides a ligand contact to ATP.

The protein belongs to the ATPase alpha/beta chains family. F-type ATPases have 2 components, CF(1) - the catalytic core - and CF(0) - the membrane proton channel. CF(1) has five subunits: alpha(3), beta(3), gamma(1), delta(1), epsilon(1). CF(0) has three main subunits: a(1), b(2) and c(9-12). The alpha and beta chains form an alternating ring which encloses part of the gamma chain. CF(1) is attached to CF(0) by a central stalk formed by the gamma and epsilon chains, while a peripheral stalk is formed by the delta and b chains.

The protein resides in the cell inner membrane. The enzyme catalyses ATP + H2O + 4 H(+)(in) = ADP + phosphate + 5 H(+)(out). In terms of biological role, produces ATP from ADP in the presence of a proton gradient across the membrane. The alpha chain is a regulatory subunit. The chain is ATP synthase subunit alpha from Methylobacterium sp. (strain 4-46).